A 375-amino-acid polypeptide reads, in one-letter code: Type II restriction enzyme ApaLI (375 aa).

It carries out the reaction Endonucleolytic cleavage of DNA to give specific double-stranded fragments with terminal 5'-phosphates.. In terms of biological role, a subtype P restriction enzyme that recognizes the double-stranded sequence 5'-GTGCAC-3' and cleaves after G-1. In Acetobacter pasteurianus (Acetobacter turbidans), this protein is Type II restriction enzyme ApaLI.